We begin with the raw amino-acid sequence, 239 residues long: Terpene cyclase idtB (239 aa).

The next 5 membrane-spanning stretches (helical) occupy residues 20–40 (MADT…ALMI), 50–70 (CMAL…TIVY), 75–95 (RVEL…MVGA), 113–133 (AGFI…ALAM), and 138–158 (GLAY…GGLF). Residue Asn-164 is glycosylated (N-linked (GlcNAc...) asparagine). A helical transmembrane segment spans residues 197–217 (EVFGWLASPLVLWSLVTFLLA).

Belongs to the paxB family.

It is found in the membrane. Its pathway is secondary metabolite biosynthesis. Its function is as follows. Terpene cyclase; part of the gene cluster that mediates the biosynthesis of paspalitrems, indole-diterpene (IDT) mycotoxins that are potent tremorgens in mammals. The geranylgeranyl diphosphate (GGPP) synthase idtG is proposed to catalyze the first step in IDT biosynthesis via catalysis of a series of iterative condensations of isopentenyl diphosphate (IPP) with dimethylallyl diphosphate (DMAPP), geranyl diphosphate (GPP), and farnesyl diphosphate (FPP), to form GGPP. Condensation of indole-3-glycerol phosphate with GGPP by the prenyltransferase idtC then forms 3-geranylgeranylindole (3-GGI). Epoxidation of the two terminal alkenes of the geranylgeranyl moiety by the FAD-dependent monooxygenase idtM, and cyclization by the terpene cyclase idtB then leads to the production of paspaline. The cytochrome P450 monooxygenase idtP then catalyzes oxidative elimination of the pendant methyl group at C-12 of paspaline and generates the C-10 ketone to yield 13-desoxypaxilline. The cytochrome P450 monooxygenase idtQ may catalyze the C-13 oxidation of 13-desoxypaxilline to afford paxilline. Considering that both paspalicine and paxilline were detected in C.paspali, idtQ also catalyzes the formation of paspalinine from 13-desoxypaxilline via paspalicine as an intermediate. Finally, the alpha-prenyltransferase idtF prenylates paspalinine at the C-20 or the C-21 positions to yield paspalitrems A and C, respectively. The hydroxylation of paspalitrem A at C-32 by a still unknown oxidase affords paspalitrem B. The sequence is that of Terpene cyclase idtB from Claviceps paspali (Rye ergot fungus).